We begin with the raw amino-acid sequence, 318 residues long: Cytochrome f (318 aa).

A signal peptide spans 1–34 (MKNNYLANLIKTLQAIVVSVALLAPLVLPSAVNA). Heme-binding residues include F35, C55, C58, and H59. A helical membrane pass occupies residues 284 to 304 (VKGLIAFFFTVILAQILLVLK).

The protein belongs to the cytochrome f family. The 4 large subunits of the cytochrome b6-f complex are cytochrome b6, subunit IV (17 kDa polypeptide, petD), cytochrome f and the Rieske protein, while the 4 small subunits are PetG, PetL, PetM and PetN. The complex functions as a dimer. Heme is required as a cofactor.

It is found in the plastid. It localises to the chloroplast thylakoid membrane. Its function is as follows. Component of the cytochrome b6-f complex, which mediates electron transfer between photosystem II (PSII) and photosystem I (PSI), cyclic electron flow around PSI, and state transitions. In Rhodomonas salina (Cryptomonas salina), this protein is Cytochrome f.